The following is a 68-amino-acid chain: Galectin-10 (68 aa).

Residues 1–68 (EPYLQVDFHT…LSISVLPDKY (68 aa)) enclose the Galectin domain.

In terms of assembly, interacts with CEL.

It is found in the cytoplasm. Its subcellular location is the cytosol. The protein localises to the cytoplasmic granule. Regulates immune responses through the recognition of cell-surface glycans. Essential for the anergy and suppressive function of CD25-positive regulatory T-cells (Treg). This Pongo pygmaeus (Bornean orangutan) protein is Galectin-10 (CLC).